A 423-amino-acid polypeptide reads, in one-letter code: Ankyrin repeat and SAM domain-containing protein 4B (423 aa).

Positions 1–251 (MSTRYHQAAS…PKDFKEKLHF (251 aa)) are mediates localization to microvilli. 3 ANK repeats span residues 31 to 60 (DGMTPTLLAAYHGNLEALEIICSRGGDPDK), 64 to 93 (WGNTPLHYAASNGHTHCISFLVNFGANIFA), and 97 to 126 (DLKSPLDAAASREQKECVALLDKAATVQNT). Positions 130–169 (KRVTRLKEQALKNARKQMKECERLQERHQNKMARTYSKED) form a coiled coil. Disordered stretches follow at residues 158–181 (QNKMARTYSKEDSGTISSSHSTLS), 207–227 (KSKKNKDTTEQLEKDGRSGQR), and 303–335 (QRQGAAGTVEEEEEEEEEEEEEKREANGTAGDL). Over residues 171–181 (GTISSSHSTLS) the composition is skewed to low complexity. The span at 207–224 (KSKKNKDTTEQLEKDGRS) shows a compositional bias: basic and acidic residues. Residues 253–352 (VEEDDDVQHE…EWEEDAVDAT (100 aa)) are mediates interaction with MYO7B. A coiled-coil region spans residues 301–335 (LFQRQGAAGTVEEEEEEEEEEEEEKREANGTAGDL). Residues 311-324 (VEEEEEEEEEEEEE) are compositionally biased toward acidic residues. An SAM domain is found at 357–409 (FLQSQHLEEFLPIFMREQIDLEALLLCSDEDLQNIHMQLGPRKKVLSAIDKRK). Residues 421–423 (TSL) carry the PDZ-binding; mediates interaction with USH1C motif.

In terms of assembly, part of the IMAC/intermicrovillar adhesion complex/intermicrovillar tip-link complex composed of ANKS4B, MYO7B, USH1C, CDHR2 and CDHR5. Interacts with USH1C; the interaction is direct and is required for ANKS4B localization to the tip of microvilli. Interacts with MYO7B; the interaction is direct. May interact with HSPA5. In terms of tissue distribution, cochlea, kidney, lung, liver, pancreas, salivary gland and small intestine (at protein level). Expressed in kidney, small intestine, pancreas, liver and colon. Not detected in heart, spleen and brain.

The protein resides in the cell projection. Its subcellular location is the microvillus. As part of the intermicrovillar adhesion complex/IMAC plays a role in epithelial brush border differentiation, controlling microvilli organization and length. Plays a role in assembly of the complex. May play a role in cellular response to endoplasmic reticulum stress. This chain is Ankyrin repeat and SAM domain-containing protein 4B, found in Mus musculus (Mouse).